The chain runs to 88 residues: MGKVAAKMKVMPQSPEVDLDELQDRLENSLPEGAKISRVDREDVAFGLIALFPTVIIPDEAGGTDTVEDAFSGVDGVESVDVDEVGRI.

Belongs to the EF-1-beta/EF-1-delta family.

Functionally, promotes the exchange of GDP for GTP in EF-1-alpha/GDP, thus allowing the regeneration of EF-1-alpha/GTP that could then be used to form the ternary complex EF-1-alpha/GTP/AAtRNA. In Natronomonas pharaonis (strain ATCC 35678 / DSM 2160 / CIP 103997 / JCM 8858 / NBRC 14720 / NCIMB 2260 / Gabara) (Halobacterium pharaonis), this protein is Elongation factor 1-beta.